A 333-amino-acid chain; its full sequence is Ornithine carbamoyltransferase (333 aa).

Carbamoyl phosphate is bound by residues 56–59, arginine 107, and 134–137; these read STRT and HPTQ. L-ornithine is bound by residues asparagine 167, aspartate 231, and 235–236; that span reads SM. Carbamoyl phosphate is bound by residues 273–274 and arginine 318; that span reads CL.

This sequence belongs to the aspartate/ornithine carbamoyltransferase superfamily. OTCase family.

The protein resides in the cytoplasm. It catalyses the reaction carbamoyl phosphate + L-ornithine = L-citrulline + phosphate + H(+). It participates in amino-acid degradation; L-arginine degradation via ADI pathway; carbamoyl phosphate from L-arginine: step 2/2. Functionally, reversibly catalyzes the transfer of the carbamoyl group from carbamoyl phosphate (CP) to the N(epsilon) atom of ornithine (ORN) to produce L-citrulline. The chain is Ornithine carbamoyltransferase from Clostridium botulinum (strain Kyoto / Type A2).